The sequence spans 68 residues: MLINVSIKLIKLYQRLAPQKIRDACRFEPTCSNYAILALQKYGFWKGWKMALNRLGRCKYPNGGEDLP.

This sequence to bacterial proteins yidD.

This is an uncharacterized protein from Haemophilus influenzae (Bacteriophage HP1).